A 454-amino-acid polypeptide reads, in one-letter code: Glutaredoxin domain-containing cysteine-rich protein CG31559 (454 aa).

Disordered stretches follow at residues 30–88 and 217–239; these read ETAD…QRQK and RSARSGDEADHSTGAGSEAGSDS. Residues 33-45 show a composition bias toward polar residues; sequence DSGNGSDLESTGL. Residues 58-69 show a composition bias toward low complexity; the sequence is SSLGSDSMHGSS. The segment covering 70 to 84 has biased composition (polar residues); it reads TEYVRQSASQPSGQR. Residues 217–227 show a composition bias toward basic and acidic residues; sequence RSARSGDEADH. A Glutaredoxin domain is found at 295 to 400; the sequence is NAKNFKEKDL…QLLKPYKSMA (106 aa).

The protein belongs to the GRXCR1 family.

The chain is Glutaredoxin domain-containing cysteine-rich protein CG31559 from Drosophila melanogaster (Fruit fly).